A 596-amino-acid polypeptide reads, in one-letter code: Myosin light chain kinase 2, skeletal/cardiac muscle (596 aa).

The interval 1–224 is disordered; the sequence is MATENGAVEL…AGQAKMQGDT (224 aa). Residue alanine 2 is modified to N-acetylalanine. Positions 40-63 are enriched in basic and acidic residues; sequence DPKKAPDPPTLKKDAKAPASEKGD. Residues 88–104 are compositionally biased toward low complexity; sequence EGSAGPPAALPQQTATP. A phosphoserine mark is found at serine 143, serine 149, and serine 151. The span at 189-209 shows a compositional bias: basic and acidic residues; that stretch reads RPAKAEEGKNILAESQKEVGE. One can recognise a Protein kinase domain in the interval 285–540; that stretch reads MNSKEALGGG…AAQCLAHPWL (256 aa). ATP contacts are provided by residues 291 to 299 and lysine 314; that span reads LGGGKFGAV. Aspartate 406 (proton acceptor) is an active-site residue. Threonine 445 is modified (phosphothreonine). The interval 574–586 is calmodulin-binding; sequence IAVSAANRFKKIS.

The protein belongs to the protein kinase superfamily. CAMK Ser/Thr protein kinase family. As to quaternary structure, may interact with centrin. Heart and skeletal muscles. Increased expression in the apical tissue compared to the interventricular septal tissue.

It localises to the cytoplasm. The enzyme catalyses L-seryl-[myosin light chain] + ATP = O-phospho-L-seryl-[myosin light chain] + ADP + H(+). It catalyses the reaction L-threonyl-[myosin light chain] + ATP = O-phospho-L-threonyl-[myosin light chain] + ADP + H(+). In terms of biological role, implicated in the level of global muscle contraction and cardiac function. Phosphorylates a specific serine in the N-terminus of a myosin light chain. In Homo sapiens (Human), this protein is Myosin light chain kinase 2, skeletal/cardiac muscle (MYLK2).